The chain runs to 61 residues: Small ribosomal subunit protein uS14 (61 aa).

Zn(2+) is bound by residues Cys24, Cys27, Cys40, and Cys43.

The protein belongs to the universal ribosomal protein uS14 family. Zinc-binding uS14 subfamily. In terms of assembly, part of the 30S ribosomal subunit. Contacts proteins S3 and S10. Zn(2+) serves as cofactor.

In terms of biological role, binds 16S rRNA, required for the assembly of 30S particles and may also be responsible for determining the conformation of the 16S rRNA at the A site. This is Small ribosomal subunit protein uS14 from Staphylococcus carnosus (strain TM300).